Reading from the N-terminus, the 470-residue chain is FAD-dependent monooxygenase dpchE (470 aa).

The signal sequence occupies residues 1–24 (MSEPHFKVIIVGGSITGLTLAHSL). FAD is bound by residues Glu35, Gly49, and Arg108. N-linked (GlcNAc...) asparagine glycosylation is present at Asn128. The active site involves Arg193. FAD is bound by residues Asp312 and Ala325. Residues 447–463 (WAVVSRSVLLLVGLAIL) form a helical membrane-spanning segment.

This sequence belongs to the paxM FAD-dependent monooxygenase family. The cofactor is FAD.

The protein localises to the membrane. It participates in secondary metabolite biosynthesis; terpenoid biosynthesis. Its function is as follows. FAD-dependent monooxygenase; part of the gene cluster that mediates the biosynthesis of the diterpenoid pyrones higginsianins A and B. The first step of the pathway is the synthesis of the alpha-pyrone moiety by the polyketide synthase dpchA via condensation of one acetyl-CoA starter unit with 3 malonyl-CoA units and 2 methylations. The alpha-pyrone is then combined with geranylgeranyl pyrophosphate (GGPP) formed by the GGPP synthase dpchD through the action of the prenyltransferase dpchC to yield a linear alpha-pyrone diterpenoid. Subsequent steps in the diterpenoid pyrone biosynthetic pathway involve the decalin core formation, which is initiated by the epoxidation of the C10-C11 olefin by the FAD-dependent oxidoreductase dpchE, and is followed by a cyclization cascade catalyzed by the terpene cyclase dpchB. The short chain dehydrogenase/reductase dpchG then oxidizes the 8S hydroxy group to a ketone and the short chain dehydrogenase/reductase dpchH reduces the ketone to the 8R hydroxy group to yield higginsianin B. Finally, the FAD-dependent oxidoreductase dpchF converts higginsianin B into higginsianin A. This chain is FAD-dependent monooxygenase dpchE, found in Colletotrichum higginsianum (strain IMI 349063) (Crucifer anthracnose fungus).